The following is a 729-amino-acid chain: Fatty acid oxidation complex subunit alpha (729 aa).

Positions 1–189 are enoyl-CoA hydratase/isomerase; sequence MLYKGDTLYL…KIGLVDGVVK (189 aa). Aspartate 296 is a binding site for substrate. The 3-hydroxyacyl-CoA dehydrogenase stretch occupies residues 311–729; that stretch reads ETPKQAAVLG…ARPVGDLKTA (419 aa). Residues methionine 324, aspartate 343, 400-402, lysine 407, and serine 429 each bind NAD(+); that span reads VVE. Histidine 450 acts as the For 3-hydroxyacyl-CoA dehydrogenase activity in catalysis. Residue asparagine 453 coordinates NAD(+). Substrate is bound by residues asparagine 500 and tyrosine 660. A disordered region spans residues 708–729; the sequence is RHNEPYYPPVEPARPVGDLKTA.

This sequence in the N-terminal section; belongs to the enoyl-CoA hydratase/isomerase family. In the C-terminal section; belongs to the 3-hydroxyacyl-CoA dehydrogenase family. Heterotetramer of two alpha chains (FadB) and two beta chains (FadA).

The enzyme catalyses a (3S)-3-hydroxyacyl-CoA + NAD(+) = a 3-oxoacyl-CoA + NADH + H(+). The catalysed reaction is a (3S)-3-hydroxyacyl-CoA = a (2E)-enoyl-CoA + H2O. It carries out the reaction a 4-saturated-(3S)-3-hydroxyacyl-CoA = a (3E)-enoyl-CoA + H2O. It catalyses the reaction (3S)-3-hydroxybutanoyl-CoA = (3R)-3-hydroxybutanoyl-CoA. The enzyme catalyses a (3Z)-enoyl-CoA = a 4-saturated (2E)-enoyl-CoA. The catalysed reaction is a (3E)-enoyl-CoA = a 4-saturated (2E)-enoyl-CoA. The protein operates within lipid metabolism; fatty acid beta-oxidation. Its function is as follows. Involved in the aerobic and anaerobic degradation of long-chain fatty acids via beta-oxidation cycle. Catalyzes the formation of 3-oxoacyl-CoA from enoyl-CoA via L-3-hydroxyacyl-CoA. It can also use D-3-hydroxyacyl-CoA and cis-3-enoyl-CoA as substrate. The sequence is that of Fatty acid oxidation complex subunit alpha from Shigella flexneri serotype 5b (strain 8401).